The following is a 481-amino-acid chain: Mediator of RNA polymerase II transcription subunit 3 (481 aa).

A coiled-coil region spans residues 79-107 (QEKFQMIRSKVLGLTERLQELSNDFEELQ). Disordered stretches follow at residues 140–261 (AGAS…MGTP) and 415–463 (NTKG…KSAY). A compositionally biased stretch (low complexity) spans 148 to 203 (TPTPAAATPTTAPTPGAGTKKAAKTAPTPTATATIGTPSNNAPTPATTATTPGTQA). The segment covering 204–213 (KKPRKPRQTK) has biased composition (basic residues). Over residues 214–248 (KQQQAAAAAAAVAQAQAQAQAQAQNQNQNNMQNKN) the composition is skewed to low complexity. Positions 249–259 (ISNPGMNSNMG) are enriched in polar residues. Positions 428–458 (MDQNQNQNQSQNQSQNQNQSMNMNMNNDSNN) are enriched in low complexity.

It belongs to the Mediator complex subunit 3 family. In terms of assembly, component of the Mediator complex.

It localises to the nucleus. Its function is as follows. Component of the Mediator complex, a coactivator involved in regulated gene transcription of nearly all RNA polymerase II-dependent genes. Mediator functions as a bridge to convey information from gene-specific regulatory proteins to the basal RNA polymerase II transcription machinery. Mediator is recruited to promoters by direct interactions with regulatory proteins and serves as a scaffold for the assembly of a functional preinitiation complex with RNA polymerase II and the general transcription factors. The chain is Mediator of RNA polymerase II transcription subunit 3 (PGD1) from Candida glabrata (strain ATCC 2001 / BCRC 20586 / JCM 3761 / NBRC 0622 / NRRL Y-65 / CBS 138) (Yeast).